The sequence spans 281 residues: Streptomycin biosynthesis protein StrF (281 aa).

It participates in antibiotic biosynthesis; streptomycin biosynthesis. Functionally, may be involved in the formation of N-methyl-L-glucosamine. The protein is Streptomycin biosynthesis protein StrF (strF) of Streptomyces griseus.